The chain runs to 301 residues: Acetylglutamate kinase (301 aa).

Residues 68–69 (GG), arginine 90, and asparagine 195 contribute to the substrate site.

It belongs to the acetylglutamate kinase family. ArgB subfamily.

It localises to the cytoplasm. It carries out the reaction N-acetyl-L-glutamate + ATP = N-acetyl-L-glutamyl 5-phosphate + ADP. The protein operates within amino-acid biosynthesis; L-arginine biosynthesis; N(2)-acetyl-L-ornithine from L-glutamate: step 2/4. Catalyzes the ATP-dependent phosphorylation of N-acetyl-L-glutamate. The polypeptide is Acetylglutamate kinase (Pseudomonas savastanoi pv. phaseolicola (strain 1448A / Race 6) (Pseudomonas syringae pv. phaseolicola (strain 1448A / Race 6))).